An 846-amino-acid chain; its full sequence is Interleukin cytokine receptor-related protein 1 (846 aa).

The N-terminal stretch at 1–25 (MFLHSPALLIWLFLFCLAGPQAVRT) is a signal peptide. At 26–418 (EPYNSTSSSS…KEDTTWTWHT (393 aa)) the chain is on the extracellular side. Residues Asn29, Asn79, Asn186, Asn214, Asn339, and Asn395 are each glycosylated (N-linked (GlcNAc...) asparagine). A disordered region spans residues 388 to 409 (EKPPATSNQTEESDGKAEKDKK). A compositionally biased stretch (basic and acidic residues) spans 400-409 (SDGKAEKDKK). A helical transmembrane segment spans residues 419–439 (YAITGGAIIAILFILSVCAGL). The Cytoplasmic segment spans residues 440–846 (KCYKKFNNKK…AFHDEVIGIH (407 aa)). Residues 476–618 (SISVLIVYSH…IPNSLMTMTT (143 aa)) enclose the SEFIR domain. The disordered stretch occupies residues 737-771 (GPIHVEPTEPEVLEPAEEPMEEAEEDEEDEDDVDS). Positions 744-771 (TEPEVLEPAEEPMEEAEEDEEDEDDVDS) are enriched in acidic residues.

As to quaternary structure, component of a heterodimeric receptor complex composed of ilcr-1 and ilcr-2. The receptor complex interacts with actl-1 and ilc-17.1 with the interaction being mediated by ilcr-2. As to expression, expressed in most neurons.

It is found in the cell membrane. Functionally, forms a receptor complex together with receptor ilcr-2, which upon activation acts as a modulator of neuronal activity. Binding of the ligand ilc-17.1 to the ilcr-1/2 receptor complex triggers a signaling cascade that activates the downstream signaling components actl-1, pik-1 and nfki-1, and results in increased neuronal activity in RMG interneurons in response to input from oxygen-sensing neurons. This leads to increased animal movement and promotes aggregation behavior. This Caenorhabditis elegans protein is Interleukin cytokine receptor-related protein 1.